We begin with the raw amino-acid sequence, 296 residues long: Small ribosomal subunit protein uS2 (296 aa).

A compositionally biased stretch (low complexity) spans 274–284; that stretch reads ASSAAPADTWA. Residues 274 to 296 are disordered; the sequence is ASSAAPADTWAGESGNPDAGVKW.

The protein belongs to the universal ribosomal protein uS2 family. As to quaternary structure, component of the small ribosomal subunit. Mature ribosomes consist of a small (40S) and a large (60S) subunit. The 40S subunit contains about 33 different proteins and 1 molecule of RNA (18S). The 60S subunit contains about 49 different proteins and 3 molecules of RNA (25S, 5.8S and 5S). Interacts with RPS21.

It localises to the cytoplasm. In terms of biological role, required for the assembly and/or stability of the 40S ribosomal subunit. Required for the processing of the 20S rRNA-precursor to mature 18S rRNA in a late step of the maturation of 40S ribosomal subunits. In Ajellomyces capsulatus (strain G186AR / H82 / ATCC MYA-2454 / RMSCC 2432) (Darling's disease fungus), this protein is Small ribosomal subunit protein uS2.